Consider the following 661-residue polypeptide: UvrABC system protein B (661 aa).

One can recognise a Helicase ATP-binding domain in the interval 25 to 182 (AGLNSKKRSQ…NDLINLQYKR (158 aa)). 38–45 (GITGSGKT) lines the ATP pocket. The Beta-hairpin motif lies at 91–114 (YYDYYQPEAYIARTDTFIEKDSSI). The Helicase C-terminal domain maps to 430 to 592 (QVEDLISEIQ…IIPKTINRAI (163 aa)). One can recognise a UVR domain in the interval 621-656 (KANINKLNKEMLKAASNLEFEQAAKLRDQLKTLEAA).

The protein belongs to the UvrB family. Forms a heterotetramer with UvrA during the search for lesions. Interacts with UvrC in an incision complex.

The protein resides in the cytoplasm. In terms of biological role, the UvrABC repair system catalyzes the recognition and processing of DNA lesions. A damage recognition complex composed of 2 UvrA and 2 UvrB subunits scans DNA for abnormalities. Upon binding of the UvrA(2)B(2) complex to a putative damaged site, the DNA wraps around one UvrB monomer. DNA wrap is dependent on ATP binding by UvrB and probably causes local melting of the DNA helix, facilitating insertion of UvrB beta-hairpin between the DNA strands. Then UvrB probes one DNA strand for the presence of a lesion. If a lesion is found the UvrA subunits dissociate and the UvrB-DNA preincision complex is formed. This complex is subsequently bound by UvrC and the second UvrB is released. If no lesion is found, the DNA wraps around the other UvrB subunit that will check the other stand for damage. The polypeptide is UvrABC system protein B (Rickettsia akari (strain Hartford)).